The chain runs to 141 residues: Hemoglobin subunit alpha (141 aa).

Residues 1-141 enclose the Globin domain; that stretch reads VLSPADKSNV…VSTVLTSKYR (141 aa). S3 is modified (phosphoserine). K7 and K11 each carry N6-succinyllysine. Position 16 is an N6-acetyllysine; alternate (K16). The residue at position 16 (K16) is an N6-succinyllysine; alternate. A Phosphotyrosine modification is found at Y24. Phosphoserine is present on S35. At K40 the chain carries N6-succinyllysine. S49 is modified (phosphoserine). H58 lines the O2 pocket. H87 is a binding site for heme b. S102 carries the phosphoserine modification. At T108 the chain carries Phosphothreonine. Phosphoserine occurs at positions 124 and 131. Residues T134 and T137 each carry the phosphothreonine modification. S138 is modified (phosphoserine).

The protein belongs to the globin family. In terms of assembly, heterotetramer of two alpha chains and two beta chains. As to expression, red blood cells.

Functionally, involved in oxygen transport from the lung to the various peripheral tissues. Hemopressin acts as an antagonist peptide of the cannabinoid receptor CNR1. Hemopressin-binding efficiently blocks cannabinoid receptor CNR1 and subsequent signaling. The protein is Hemoglobin subunit alpha (HBA) of Saguinus mystax (Moustached tamarin).